We begin with the raw amino-acid sequence, 98 residues long: Integration host factor subunit alpha (98 aa).

Positions 52–73 (FDLREKNQRPGRNPKTGEDIPI) are disordered.

It belongs to the bacterial histone-like protein family. As to quaternary structure, heterodimer of an alpha and a beta chain.

In terms of biological role, this protein is one of the two subunits of integration host factor, a specific DNA-binding protein that functions in genetic recombination as well as in transcriptional and translational control. This Aeromonas hydrophila subsp. hydrophila (strain ATCC 7966 / DSM 30187 / BCRC 13018 / CCUG 14551 / JCM 1027 / KCTC 2358 / NCIMB 9240 / NCTC 8049) protein is Integration host factor subunit alpha.